The primary structure comprises 372 residues: MQIQAIELAHFRNYRGLQVDFMPGVNIFVGANGQGKTNLLESIALLSGGGSHRDARDAEMVQWQEAYYRIKAMGTADGQPVVIELAFGGERRKLAKVNNRRLRRIADLSETMNTVVFSPEDLSLVKGSPAQRRRYLDRELSQASPAYGDVLSRYARVLTQRNSLLRRLREGSATAAELELWDDQLAPLAVETLARRLDGLARIAPYARQIYRGLSRDKEQIELTYRSSFPLPDDRSRWLEAYRKALQERRAEEIARQATLTGPHRDDLQLFLNGRDARIYGSQGQQRSIALSLKLAEIAFIHQIKKEYPIVLLDDVMSELDPDRRQQLLSELESKNIQVFITTTHLHAFSPEQLGRAGIYRIQAGQLSRSNE.

Residue 30–37 coordinates ATP; sequence GANGQGKT.

It belongs to the RecF family.

The protein localises to the cytoplasm. The RecF protein is involved in DNA metabolism; it is required for DNA replication and normal SOS inducibility. RecF binds preferentially to single-stranded, linear DNA. It also seems to bind ATP. This is DNA replication and repair protein RecF from Heliobacterium modesticaldum (strain ATCC 51547 / Ice1).